Here is a 157-residue protein sequence, read N- to C-terminus: CASP-like protein 1 (157 aa).

Topologically, residues 1–13 (MKTEARDGGSEWR) are cytoplasmic. The helical transmembrane segment at 14–34 (WVAIFELFLRLAAIVSTSVAV) threads the bilayer. Over 35–40 (YAAMGK) the chain is Extracellular. Residues 41 to 61 (IFVVAVNGVACFYLLMSLPVS) traverse the membrane as a helical segment. Residues 62-82 (IFNIMRPHAYPANRVFLNIMD) are Cytoplasmic-facing. Residues 83–103 (MVMVALVTAGALAAGIVYLVE) traverse the membrane as a helical segment. At 104 to 121 (KAGNARASWVSVWSQFDS) the chain is on the extracellular side. Residues 122-142 (SSCFAVLALILHVLLSGVILY) traverse the membrane as a helical segment. Residues 143 to 157 (KQALNIKFKKLDSVD) are Cytoplasmic-facing.

It belongs to the Casparian strip membrane proteins (CASP) family. Homodimer and heterodimers.

Its subcellular location is the cell membrane. The chain is CASP-like protein 1 from Picea sitchensis (Sitka spruce).